A 244-amino-acid polypeptide reads, in one-letter code: 1-(5-phosphoribosyl)-5-[(5-phosphoribosylamino)methylideneamino] imidazole-4-carboxamide isomerase (244 aa).

Asp8 serves as the catalytic Proton acceptor. Asp129 functions as the Proton donor in the catalytic mechanism.

Belongs to the HisA/HisF family.

Its subcellular location is the cytoplasm. It carries out the reaction 1-(5-phospho-beta-D-ribosyl)-5-[(5-phospho-beta-D-ribosylamino)methylideneamino]imidazole-4-carboxamide = 5-[(5-phospho-1-deoxy-D-ribulos-1-ylimino)methylamino]-1-(5-phospho-beta-D-ribosyl)imidazole-4-carboxamide. It functions in the pathway amino-acid biosynthesis; L-histidine biosynthesis; L-histidine from 5-phospho-alpha-D-ribose 1-diphosphate: step 4/9. The sequence is that of 1-(5-phosphoribosyl)-5-[(5-phosphoribosylamino)methylideneamino] imidazole-4-carboxamide isomerase from Bradyrhizobium sp. (strain ORS 278).